The chain runs to 446 residues: Cytochrome P450 monooxygenase ATR14 (446 aa).

The tract at residues 403 to 446 is disordered; that stretch reads NFTYPDEFRPDRWLDDRDQKEYEHDHGDAMQPFSVGPRDCPSQK. Basic and acidic residues predominate over residues 408–430; sequence DEFRPDRWLDDRDQKEYEHDHGD. Cysteine 442 contacts heme.

This sequence belongs to the cytochrome P450 family. Requires heme as cofactor.

Its pathway is mycotoxin biosynthesis. Cytochrome P450 monooxygenase; part of the core atranone cluster (CAC) which products are predicted to catalyze most or all steps of mycotoxin atranone synthesis, starting from geranylgeranyl pyrophosphate (GGPP). The initial cyclization of GGPP to dolabellane is probably performed by the terpene cyclase ATR13. The Baeyer-Villiger oxidation near the end of the atranone synthesis, which converts atranones D and E to atranones F and G is predicted to be catalyzed by the monooxygenase ATR8. Of the CAC's other predicted gene products, the reducing PKS ATR6 might synthesize a polyketide chain. This polyketide is probably transferred onto the atranone backbone by the polyketide transferase ATR5. Other predicted CAC products include 4 oxygenases (ATR2, ATR3, ATR4, and ATR14), 3 short-chain reductases (ATR7, ATR9, and ATR10), and a methyltransferase (ATR12). These may all be involved in the various steps of atranone biosynthesis, although their specific roles must await experimental determination. This Stachybotrys chlorohalonatus (strain IBT 40285) protein is Cytochrome P450 monooxygenase ATR14.